The sequence spans 632 residues: MAU2 chromatid cohesion factor homolog (632 aa).

TPR repeat units lie at residues glycine 453–glutamate 486 and serine 493–isoleucine 526.

This sequence belongs to the SCC4/mau-2 family. As to quaternary structure, interacts with Nipped-B to form the cohesin loading complex.

It is found in the nucleus. Its subcellular location is the nucleoplasm. Its function is as follows. Required for association of the cohesin complex with chromatin during interphase. Plays a role in sister chromatid cohesion and normal progression through prometaphase. This is MAU2 chromatid cohesion factor homolog from Drosophila sechellia (Fruit fly).